The chain runs to 472 residues: Adenosylhomocysteinase (472 aa).

Substrate contacts are provided by threonine 62, aspartate 137, and glutamate 197. NAD(+) is bound at residue threonine 198 to threonine 200. The substrate site is built by lysine 227 and aspartate 231. NAD(+)-binding positions include asparagine 232, glycine 261–glycine 266, glutamate 284, asparagine 319, isoleucine 340–histidine 342, and asparagine 385.

It belongs to the adenosylhomocysteinase family. It depends on NAD(+) as a cofactor.

It is found in the cytoplasm. The enzyme catalyses S-adenosyl-L-homocysteine + H2O = L-homocysteine + adenosine. The protein operates within amino-acid biosynthesis; L-homocysteine biosynthesis; L-homocysteine from S-adenosyl-L-homocysteine: step 1/1. Its function is as follows. May play a key role in the regulation of the intracellular concentration of adenosylhomocysteine. The polypeptide is Adenosylhomocysteinase (Bordetella pertussis (strain Tohama I / ATCC BAA-589 / NCTC 13251)).